We begin with the raw amino-acid sequence, 504 residues long: One cut domain family member 2 (504 aa).

Disordered stretches follow at residues 29-95 (LGTL…GTAA), 166-189 (KFHHPHPHHHPHHHHHHHHQRLSG), 274-332 (EQHL…QLEE), and 485-504 (WQDDLSTGGSSSTSSTCTKA). Residues 35 to 56 (PAGGGSGGGGGGGGGGGGGGPG) are compositionally biased toward gly residues. Residues 168–186 (HHPHPHHHPHHHHHHHHQR) show a composition bias toward basic residues. The CUT DNA-binding region spans 324 to 410 (VATSGQLEEI…QRMSALRLAA (87 aa)). The homeobox DNA-binding region spans 426 to 485 (QKKSRLVFTDLQRRTLFAIFKENKRPSKEMQITISQQLGLELTTVSNFFMNARRRSLEKW). Residues 490 to 504 (STGGSSSTSSTCTKA) are compositionally biased toward low complexity.

Belongs to the CUT homeobox family.

It is found in the nucleus. Functionally, transcriptional activator. Activates the transcription of a number of liver genes such as HNF3B. This Homo sapiens (Human) protein is One cut domain family member 2 (ONECUT2).